Reading from the N-terminus, the 443-residue chain is Ribosomal protein uS12 methylthiotransferase RimO (443 aa).

The MTTase N-terminal domain occupies 11–121 (PTVGFVSLGC…VMEAVHGALP (111 aa)). [4Fe-4S] cluster contacts are provided by Cys-20, Cys-56, Cys-85, Cys-152, Cys-156, and Cys-159. The region spanning 138-375 (LTPRHYAYLK…METQAEISAA (238 aa)) is the Radical SAM core domain. One can recognise a TRAM domain in the interval 378-443 (DAKIGRTIEV…DAHDLWATPV (66 aa)).

The protein belongs to the methylthiotransferase family. RimO subfamily. It depends on [4Fe-4S] cluster as a cofactor.

The protein resides in the cytoplasm. It catalyses the reaction L-aspartate(89)-[ribosomal protein uS12]-hydrogen + (sulfur carrier)-SH + AH2 + 2 S-adenosyl-L-methionine = 3-methylsulfanyl-L-aspartate(89)-[ribosomal protein uS12]-hydrogen + (sulfur carrier)-H + 5'-deoxyadenosine + L-methionine + A + S-adenosyl-L-homocysteine + 2 H(+). Functionally, catalyzes the methylthiolation of an aspartic acid residue of ribosomal protein uS12. The polypeptide is Ribosomal protein uS12 methylthiotransferase RimO (Thiobacillus denitrificans (strain ATCC 25259 / T1)).